Consider the following 129-residue polypeptide: Small ribosomal subunit protein uS8 (129 aa).

The protein belongs to the universal ribosomal protein uS8 family. Part of the 30S ribosomal subunit. Contacts proteins S5 and S12.

Its function is as follows. One of the primary rRNA binding proteins, it binds directly to 16S rRNA central domain where it helps coordinate assembly of the platform of the 30S subunit. This Colwellia psychrerythraea (strain 34H / ATCC BAA-681) (Vibrio psychroerythus) protein is Small ribosomal subunit protein uS8.